The primary structure comprises 540 residues: MPFAEDKTYKYICRNFSNFCNVDVVEILPYLPCLTARDQDRLRATCTLSGNRDTLWHLFNTLQRRPGWVEYFIAALRGCELVDLADEVASVYQSYQPRTSDRPPDPLEPPSLPAERPGPPTPAAAHSIPYNSCREKEPSYPMPVQETQAPESPGENSEQALQTLSPRAIPRNPDGGPLESSSDLAALSPLTSSGHQEQDTELGSTHTAGATSSLTPSRGPVSPSVSFQPLARSTPRASRLPGPTGSVVSTGTSFSSSSPGLASAGAAEGKQGAESDQAEPIICSSGAEAPANSLPSKVPTTLMPVNTVALKVPANPASVSTVPSKLPTSSKPPGAVPSNALTNPAPSKLPINSTRAGMVPSKVPTSMVLTKVSASTVPTDGSSRNEETPAAPTPAGATGGSSAWLDSSSENRGLGSELSKPGVLASQVDSPFSGCFEDLAISASTSLGMGPCHGPEENEYKSEGTFGIHVAENPSIQLLEGNPGPPADPDGGPRPQADRKFQEREVPCHRPSPGALWLQVAVTGVLVVTLLVVLYRRRLH.

Proline 2 is subject to N-acetylproline. Residues 2 to 513 (PFAEDKTYKY…REVPCHRPSP (512 aa)) are Cytoplasmic-facing. Glycyl lysine isopeptide (Lys-Gly) (interchain with G-Cter in ubiquitin) cross-links involve residues lysine 7 and lysine 10. The 68-residue stretch at 10–77 (KYICRNFSNF…WVEYFIAALR (68 aa)) folds into the CARD domain. Residues 10 to 77 (KYICRNFSNF…WVEYFIAALR (68 aa)) are required for interaction with NLRX1. Residue cysteine 79 is the site of S-palmitoyl cysteine attachment. The interval 95–297 (YQPRTSDRPP…EAPANSLPSK (203 aa)) is disordered. A compositionally biased stretch (pro residues) spans 106–122 (PLEPPSLPAERPGPPTP). An interaction with TRAF2 region spans residues 143–147 (PVQET). 2 stretches are compositionally biased toward polar residues: residues 145-165 (QETQAPESPGENSEQALQTLS) and 179-216 (ESSSDLAALSPLTSSGHQEQDTELGSTHTAGATSSLTP). 5 positions are modified to phosphoserine: serine 152, serine 157, serine 165, serine 180, and serine 188. Residues 153 to 158 (PGENSE) are interaction with TRAF6. The residue at position 215 (threonine 215) is a Phosphothreonine. Serine 222 and serine 233 each carry phosphoserine. Threonine 234 carries the phosphothreonine modification. Asymmetric dimethylarginine is present on arginine 236. Residues 241 to 266 (PGPTGSVVSTGTSFSSSSPGLASAGA) show a composition bias toward low complexity. 2 positions are modified to phosphoserine: serine 253 and serine 258. Glycyl lysine isopeptide (Lys-Gly) (interchain with G-Cter in ubiquitin) cross-links involve residues lysine 311 and lysine 325. Disordered regions lie at residues 314-358 (ANPA…RAGM) and 373-419 (SAST…SELS). 3 stretches are compositionally biased toward polar residues: residues 317-331 (ASVSTVPSKLPTSSK), 339-355 (NALTNPAPSKLPINSTR), and 373-382 (SASTVPTDGS). Residues 388-403 (TPAAPTPAGATGGSSA) are compositionally biased toward low complexity. The residue at position 408 (serine 408) is a Phosphoserine. Residues 439–442 (LAIS) carry the pLxIS motif motif. Serine 442 is modified (phosphoserine; by TBK1). The tract at residues 455 to 460 (PEENEY) is interaction with TRAF6. Glycyl lysine isopeptide (Lys-Gly) (interchain with G-Cter in ubiquitin) cross-links involve residues lysine 461 and lysine 500. Lysine 461 is covalently cross-linked ((Microbial infection) Glycyl lysine isopeptide (Lys-Gly) (interchain with G-Cter in UFM1)). The interval 476–507 (IQLLEGNPGPPADPDGGPRPQADRKFQEREVP) is disordered. The span at 496–507 (QADRKFQEREVP) shows a compositional bias: basic and acidic residues. A helical transmembrane segment spans residues 514–534 (GALWLQVAVTGVLVVTLLVVL). The Mitochondrial intermembrane segment spans residues 535–540 (YRRRLH).

In terms of assembly, self-associates and polymerizes (via CARD domains) to form 400 nM long three-stranded helical filaments on mitochondria, filament nucleation requires interaction with RIGI whose CARD domains act as a template for filament assembly. Interacts with RIGI, IFIH1/MDA5, TRAF2, TRAF6 and C1QBP. May interact with FADD, RIPK1, CHUK and IKBKB. Interacts (when phosphorylated) with IRF3; following activation and phosphorylation on the pLxIS motif by TBK1, recruits IRF3. Interacts with NLRX1. Interaction with NLRX1 requires the CARD domain. Interacts with PSMA7. Interacts with TRAFD1. Interacts (via C-terminus) with PCBP2 in a complex containing MAVS/IPS1, PCBP2 and ITCH. Interacts with CYLD. Interacts with SRC. Interacts with DHX58/LGP2 and IKBKE. Interacts with STING1. Interacts with IFIT3 (via N-terminus). Interacts with TBK1 only in the presence of IFIT3. Interacts with TTLL12; the interaction prevents MAVS binding to TBK1 and IKBKE. Interacts with MUL1. Interacts with ANKRD17. Interacts with NDFIP1. Interacts with SMURF1; the interaction is mediated by NDFIP1 and leads to MAVS ubiquitination and degradation. Interacts with UBXN1; this interaction inhibits MAVS-mediated antiviral pathway. Interacts (via C-terminus) with GPATCH3; the interaction is markedly increased upon viral infection. Directly interacts (via CARD domain) with ATG5 and ATG12, either as ATG5 and ATG12 monomers or as ATG12-ATG5 conjugates. Interacts with DHX33 (via the helicase C-terminal domain). Interacts with DDX3X (via C-terminus); this interaction occurs rapidly, but transiently after Sendai virus infection. The interaction with DDX3X potentiates MAVS-mediated IFNB induction. Conversely inhibition of this interaction, for instance by HCV core protein, prevents MAVS-mediated IFNB induction. Transiently interacts with TRAF3 early during Sendai virus infection. Interacts with CLPB; the interaction is enhanced by Sendai virus infection. Interacts with TRAF3IP3. Interacts with TOMM70; the interaction is enhanced by Sendai virus infection. Interacts with ZNFX1. Interacts with N4BP3; this interaction promotes the polyubiquitination of MAVS. Interacts with TAX1BP1; this interaction induces MAVS polyubiquitination. Interacts with NLRP3; promoting NLRP3 recruitment to mitochondria and activation of the NLRP3 inflammasome. Interacts with ECSIT; this interaction bridges RIGI to the MAVS complex at the mitochondrion. Interacts with UBL7; this interaction promotes MAVS 'Lys-27'-linked ubiquitination leading to type I interferon production. Interacts (via transmembrane domain) with SMIM30/MAVI1 (via transmembrane domain); the interaction disrupts MAVS interaction with RIGI and inhibits MAVS aggregation, resulting in the repression of type I interferon signaling and innate immune responses. (Microbial infection) Interacts with hepatitis C virus (HCV) NS3/4A protease; this interaction leads to MAVS cleavage, thereby preventing the establishment of an antiviral state. As to quaternary structure, (Microbial infection) Interacts with hepatitis GB virus B NS3/4A protease; this interaction leads to MAVS cleavage. In terms of assembly, (Microbial infection) Interacts with human respiratory syncytial virus/HRSV protein NS1; this interaction disrupts MAVS binding to RIGI. (Microbial infection) Interacts with Andes virus Nnon-structural protein NS-S; this interaction may reduce MAVS ubiquitination and leads to inhibition of MAVS-induced type-I IFN signaling pathway. As to quaternary structure, (Microbial infection) Interacts with Seneca Valley virus protease 3C; this interaction allows the cleavage of MAVS and subsequent suppression of host innate immunity. In terms of assembly, (Microbial infection) Interacts with SARS-CoV virus protein ORF9b; this interaction mediates MAVS proteasomal degradation. (Microbial infection) Interacts with SARS-CoV-2 virus protein M; this interaction impairs MAVS self-association and its recruitment of downstream components. As to quaternary structure, (Microbial infection) Interacts with foot-and-mouth disease virus protein VP1; this interaction competes with TRAF3 interaction to MAVS leading to suppression of host innate immunity. In terms of assembly, (Microbial infection) Interacts with Epstein-Barr virus protein BILF1; this interaction mediates MAVS routing from mitochondria to lysosomes. Post-translationally, following activation, phosphorylated by TBK1 at Ser-442 in the pLxIS motif. The phosphorylated pLxIS motif constitutes an IRF3-binding motif, leading to recruitment of the transcription factor IRF3 to induce type-I interferons and other cytokines. In terms of processing, ubiquitinated. Undergoes 'Lys-48'-linked polyubiquitination catalyzed by ITCH; ITCH-dependent polyubiquitination is mediated by the interaction with PCBP2 and leads to MAVS/IPS1 proteasomal degradation. Ubiquitinated by RNF125, leading to its degradation by the proteasome. Undergoes 'Lys-48'-linked ubiquitination catalyzed by SMURF1. Undergoes 'Lys-48'-linked ubiquitination catalyzed by MARCHF5 at Lys-7 and Lys-500, leading to proteasomal degradation. Ubiquitinated via 'Lys-63'-linked ubiquitination at Lys-10, Lys-311 and Lys-461 by UBE2N and TRIM31, promoting MAVS polymerization and formation of three-stranded helical filaments on mitochondria. Undergoes 'Lys-63'-linked ubiquitination leading to enhanced interaction between MAVS and TRAF2. Undergoes 'Lys-27'-linked ubiquitination by TRIM21 leading to enhanced interaction between MAVS and TBK1. Deubiquitinated by USP10 leading to attenuation of RIGI-mediated MAVS aggregation and production of type I interferon. Undergoes 'Lys-48'-linked polyubiquitination catalyzed by RNF115 leading to its degradation. Palmitoylated by ZHDDC4. Palmitoylation promotes MAVS stabilization and activation by inhibiting 'Lys-48'- but facilitating 'Lys-63'-linked ubiquitination. Post-translationally, proteolytically cleaved by apoptotic caspases during apoptosis, leading to its inactivation. Cleavage by CASP3 during virus-induced apoptosis inactivates it, preventing cytokine overproduction. In terms of processing, (Microbial infection) Cleaved and degraded by hepatitis A virus (HAV) protein 3ABC allowing the virus to disrupt the activation of host IRF3 through the MDA5 pathway. (Microbial infection) Cleaved by the protease 2A of coxsackievirus B3, poliovirus and enterovirus 71 allowing the virus to disrupt the host type I interferon production. Post-translationally, (Microbial infection) Cleaved by Seneca Valley virus protease 3C allowing the virus to suppress interferon type-I production. In terms of processing, (Microbial infection) Cleaved by HCV protease NS3/4A, thereby preventing the establishment of an antiviral state. (Microbial infection) UFMylated by ULF1 in association with Epstein-Barr virus BILF1; leading to MAVS routing to the lysosome. Present in T-cells, monocytes, epithelial cells and hepatocytes (at protein level). Ubiquitously expressed, with highest levels in heart, skeletal muscle, liver, placenta and peripheral blood leukocytes.

The protein localises to the mitochondrion outer membrane. It is found in the mitochondrion. The protein resides in the peroxisome. Its function is as follows. Adapter required for innate immune defense against viruses. Acts downstream of DHX33, RIGI and IFIH1/MDA5, which detect intracellular dsRNA produced during viral replication, to coordinate pathways leading to the activation of NF-kappa-B, IRF3 and IRF7, and to the subsequent induction of antiviral cytokines such as IFNB and RANTES (CCL5). Peroxisomal and mitochondrial MAVS act sequentially to create an antiviral cellular state. Upon viral infection, peroxisomal MAVS induces the rapid interferon-independent expression of defense factors that provide short-term protection, whereas mitochondrial MAVS activates an interferon-dependent signaling pathway with delayed kinetics, which amplifies and stabilizes the antiviral response. May activate the same pathways following detection of extracellular dsRNA by TLR3. May protect cells from apoptosis. Involved in NLRP3 inflammasome activation by mediating NLRP3 recruitment to mitochondria. The sequence is that of Mitochondrial antiviral-signaling protein from Homo sapiens (Human).